A 215-amino-acid chain; its full sequence is Large ribosomal subunit protein uL3 (215 aa).

Positions 124 to 164 are disordered; that stretch reads KRHGFSRGPMTHGSKNHREPGSTGAGTTPGRIYPGKRMAGR.

This sequence belongs to the universal ribosomal protein uL3 family. Part of the 50S ribosomal subunit. Forms a cluster with proteins L14 and L19.

Functionally, one of the primary rRNA binding proteins, it binds directly near the 3'-end of the 23S rRNA, where it nucleates assembly of the 50S subunit. The protein is Large ribosomal subunit protein uL3 of Synechococcus sp. (strain RCC307).